Reading from the N-terminus, the 546-residue chain is Chaperonin GroEL (546 aa).

ATP contacts are provided by residues 30 to 33 (TLGP), K51, 87 to 91 (DGTTT), G415, 479 to 481 (NAA), and D495. Positions 527-546 (DESAAPAMPGGMGGMGDMGM) are disordered. Residues 536–546 (GGMGGMGDMGM) are compositionally biased toward gly residues.

This sequence belongs to the chaperonin (HSP60) family. As to quaternary structure, forms a cylinder of 14 subunits composed of two heptameric rings stacked back-to-back. Interacts with the co-chaperonin GroES.

The protein resides in the cytoplasm. It carries out the reaction ATP + H2O + a folded polypeptide = ADP + phosphate + an unfolded polypeptide.. Together with its co-chaperonin GroES, plays an essential role in assisting protein folding. The GroEL-GroES system forms a nano-cage that allows encapsulation of the non-native substrate proteins and provides a physical environment optimized to promote and accelerate protein folding. The chain is Chaperonin GroEL from Acidovorax sp. (strain JS42).